The primary structure comprises 833 residues: Leucine--tRNA ligase (833 aa).

The short motif at 41–52 (PYPSGAGLHVGH) is the 'HIGH' region element. A 'KMSKS' region motif is present at residues 610-614 (KMSKS). K613 serves as a coordination point for ATP.

Belongs to the class-I aminoacyl-tRNA synthetase family.

It is found in the cytoplasm. It carries out the reaction tRNA(Leu) + L-leucine + ATP = L-leucyl-tRNA(Leu) + AMP + diphosphate. The chain is Leucine--tRNA ligase from Streptococcus pneumoniae (strain 70585).